The sequence spans 247 residues: TLC domain-containing protein 1 (247 aa).

The signal sequence occupies residues 1 to 35 (MPRLLHPALPLLLGATLTFRALRRALCRLPLPVHV). Residues 36–46 (RADPLRTWRWH) lie on the Extracellular side of the membrane. Residues 40-234 (LRTWRWHNLL…LLRSDFCPEH (195 aa)) form the TLC domain. Residues 47–67 (NLLVSFAHSIVSGIWALLCVW) form a helical membrane-spanning segment. Residues 68 to 83 (QTPDMLVEIETAWSLS) lie on the Cytoplasmic side of the membrane. Residues 84 to 104 (GYLLVCFSAGYFIHDTVDIVA) traverse the membrane as a helical segment. Topologically, residues 105-123 (SGQTRASWEYLVHHVMAMG) are extracellular. Residues 124-144 (AFFSGIFWSSFVGGGVLTLLV) constitute an intramembrane region (helical). Residues 145-173 (EVSNIFLTIRMMMKISNAQDHLLYRVNKY) lie on the Extracellular side of the membrane. Residues 174–194 (VNLVMYFLFRLAPQAYLTHFF) traverse the membrane as a helical segment. The Cytoplasmic portion of the chain corresponds to 195 to 201 (LRYVNQR). A helical transmembrane segment spans residues 202–222 (TLGTFLLGILLMLDVMIIIYF). At 223 to 247 (SRLLRSDFCPEHVPKKQHKDKFLTE) the chain is on the extracellular side.

Its subcellular location is the cell membrane. Its function is as follows. Regulates the composition and fluidity of the plasma membrane. Inhibits the incorporation of membrane-fluidizing phospholipids containing omega-3 long-chain polyunsaturated fatty acids (LCPUFA) and thereby promotes membrane rigidity. Does not appear to have any effect on LCPUFA synthesis. The chain is TLC domain-containing protein 1 (TLCD1) from Homo sapiens (Human).